Consider the following 607-residue polypeptide: (R)-limonene synthase 1, chloroplastic (607 aa).

Residues 1–52 constitute a chloroplast transit peptide; it reads MSSCINPSTLATSVNGFKCLPLATNRAAIRIMAKNKPVQCLVSTKYDNLTVD. Mn(2+) is bound by residues Asp-343 and Asp-347. Substrate is bound by residues Asp-343, Asp-347, Arg-485, Asp-488, and Lys-504. The DDXXD motif motif lies at 343–347; the sequence is DDIYD. Position 488 (Asp-488) interacts with Mn(2+).

It belongs to the terpene synthase family. Mg(2+) is required as a cofactor. It depends on Mn(2+) as a cofactor.

The protein resides in the plastid. Its subcellular location is the chloroplast. It catalyses the reaction (2E)-geranyl diphosphate = (4R)-limonene + diphosphate. Its activity is regulated as follows. Inhibited by 2-fluorogeranyl diphosphate (FGPP) and 2-fluoroneryl diphosphate (FNPP). Its function is as follows. Catalyzes the conversion of geranyl diphosphate to (+)-(4R)-limonene. Produces exclusively the (+)-enantiomer. Can use neryl diphosphate as substrate. Has no activity with farnesyl diphosphate. The chain is (R)-limonene synthase 1, chloroplastic from Citrus sinensis (Sweet orange).